A 113-amino-acid chain; its full sequence is Hydrogenase maturation factor HypA (113 aa).

His-2 serves as a coordination point for Ni(2+). Zn(2+) contacts are provided by Cys-73, Cys-76, Cys-89, and Cys-92.

The protein belongs to the HypA/HybF family.

Its function is as follows. Involved in the maturation of [NiFe] hydrogenases. Required for nickel insertion into the metal center of the hydrogenase. The chain is Hydrogenase maturation factor HypA from Azotobacter vinelandii.